Reading from the N-terminus, the 282-residue chain is Undecaprenyl-diphosphatase (282 aa).

The next 7 helical transmembrane spans lie at 40 to 60 (GAAF…IYFF), 85 to 105 (AKMG…GLLF), 117 to 137 (YWIS…EWLI), 158 to 178 (ALII…RSGV), 193 to 213 (AARF…IYQL), 231 to 251 (IVAT…LITF), and 258 to 278 (AVFI…IATG).

It belongs to the UppP family.

It localises to the cell inner membrane. The enzyme catalyses di-trans,octa-cis-undecaprenyl diphosphate + H2O = di-trans,octa-cis-undecaprenyl phosphate + phosphate + H(+). Functionally, catalyzes the dephosphorylation of undecaprenyl diphosphate (UPP). Confers resistance to bacitracin. This chain is Undecaprenyl-diphosphatase, found in Prosthecochloris aestuarii (strain DSM 271 / SK 413).